Here is a 231-residue protein sequence, read N- to C-terminus: Fibrillarin-like rRNA/tRNA 2'-O-methyltransferase (231 aa).

S-adenosyl-L-methionine contacts are provided by residues 89 to 90 (TT), 108 to 109 (EF), 133 to 134 (DA), and 153 to 156 (DIAQ).

It belongs to the methyltransferase superfamily. Fibrillarin family. In terms of assembly, interacts with nop5. Component of box C/D small ribonucleoprotein (sRNP) particles that contain rpl7ae, FlpA and nop5, plus a guide RNA.

Functionally, involved in pre-rRNA and tRNA processing. Utilizes the methyl donor S-adenosyl-L-methionine to catalyze the site-specific 2'-hydroxyl methylation of ribose moieties in rRNA and tRNA. Site specificity is provided by a guide RNA that base pairs with the substrate. Methylation occurs at a characteristic distance from the sequence involved in base pairing with the guide RNA. The polypeptide is Fibrillarin-like rRNA/tRNA 2'-O-methyltransferase (Sulfolobus acidocaldarius (strain ATCC 33909 / DSM 639 / JCM 8929 / NBRC 15157 / NCIMB 11770)).